The following is a 468-amino-acid chain: Protein DML1 (468 aa).

It belongs to the misato family.

The protein resides in the mitochondrion. Involved in the partitioning of the mitochondrial organelle and mitochondrial DNA (mtDNA) inheritance. This is Protein DML1 (DML1) from Kluyveromyces lactis (strain ATCC 8585 / CBS 2359 / DSM 70799 / NBRC 1267 / NRRL Y-1140 / WM37) (Yeast).